A 348-amino-acid chain; its full sequence is Protein RecA (348 aa).

64-71 provides a ligand contact to ATP; that stretch reads GPESSGKT. The span at 326–335 shows a compositional bias: basic and acidic residues; it reads EIDGTNKEPL. The disordered stretch occupies residues 326–348; sequence EIDGTNKEPLDENEETLSLLDDE. Acidic residues predominate over residues 336–348; the sequence is DENEETLSLLDDE.

The protein belongs to the RecA family.

Its subcellular location is the cytoplasm. Can catalyze the hydrolysis of ATP in the presence of single-stranded DNA, the ATP-dependent uptake of single-stranded DNA by duplex DNA, and the ATP-dependent hybridization of homologous single-stranded DNAs. It interacts with LexA causing its activation and leading to its autocatalytic cleavage. The protein is Protein RecA of Listeria innocua serovar 6a (strain ATCC BAA-680 / CLIP 11262).